Here is a 1344-residue protein sequence, read N- to C-terminus: Regulatory-associated protein of TOR 1 (1344 aa).

Basic and acidic residues predominate over residues 28-44 (CVSSHDDGDSRRKDSEA). Disordered regions lie at residues 28–56 (CVSS…GTTE) and 771–818 (ASTD…DSVS). Residues 785–816 (SSSPLGSSGLMQGSPLSDDSSLHSDSGMMHDS) are compositionally biased toward low complexity. WD repeat units follow at residues 1025–1064 (RFET…LLNG), 1070–1111 (FPDK…GKQK), 1125–1164 (GARD…LVRS), 1168–1208 (ESEC…PLVC), 1214–1255 (QKVE…DTYL), 1259–1298 (AHRG…LGII), and 1307–1344 (QKIG…SQAR).

This sequence belongs to the WD repeat RAPTOR family. Interacts with TOR, ATPK1 and ML1. Interacts with KIN10. In terms of processing, phosphorylated by KIN10. Expressed in roots, leaves, flowers and seeds.

The protein resides in the cytoplasm. Probable component of the plant TOR kinase pathway that recruits substrates for TOR. Modulates plant cell growth and regulates the activity of ATPK1 kinase in response to osmotic stress. This Arabidopsis thaliana (Mouse-ear cress) protein is Regulatory-associated protein of TOR 1 (RAPTOR1).